A 157-amino-acid chain; its full sequence is ATP synthase subunit b (157 aa).

Residues 7–29 (LISQAIAFSLFILFTARFVWPYL) form a helical membrane-spanning segment.

This sequence belongs to the ATPase B chain family. As to quaternary structure, F-type ATPases have 2 components, F(1) - the catalytic core - and F(0) - the membrane proton channel. F(1) has five subunits: alpha(3), beta(3), gamma(1), delta(1), epsilon(1). F(0) has three main subunits: a(1), b(2) and c(10-14). The alpha and beta chains form an alternating ring which encloses part of the gamma chain. F(1) is attached to F(0) by a central stalk formed by the gamma and epsilon chains, while a peripheral stalk is formed by the delta and b chains.

The protein localises to the cell inner membrane. Functionally, f(1)F(0) ATP synthase produces ATP from ADP in the presence of a proton or sodium gradient. F-type ATPases consist of two structural domains, F(1) containing the extramembraneous catalytic core and F(0) containing the membrane proton channel, linked together by a central stalk and a peripheral stalk. During catalysis, ATP synthesis in the catalytic domain of F(1) is coupled via a rotary mechanism of the central stalk subunits to proton translocation. Its function is as follows. Component of the F(0) channel, it forms part of the peripheral stalk, linking F(1) to F(0). This is ATP synthase subunit b from Nitrosomonas europaea (strain ATCC 19718 / CIP 103999 / KCTC 2705 / NBRC 14298).